The following is a 132-amino-acid chain: MRHRKSGRKFNRTSAHRKAMFRNMTASLVEHELIKTTLPKAKELRRVAEPLITLAKNDSVANRRLAFSRLRSDAAVAKLFDELGPRYSERPGGYLRILKCGFRAGDNAPMAFVELVGRPLDIEAEEMDDDEE.

This sequence belongs to the bacterial ribosomal protein bL17 family. As to quaternary structure, part of the 50S ribosomal subunit. Contacts protein L32.

This is Large ribosomal subunit protein bL17 from Marinobacter nauticus (strain ATCC 700491 / DSM 11845 / VT8) (Marinobacter aquaeolei).